The chain runs to 220 residues: Charged multivesicular body protein 3 (220 aa).

A lipid anchor (N-myristoyl glycine) is attached at glycine 2. Residues 22–54 (KIRKEMRVIDRQIRDIQREQEKVKRSIKESAKK) are a coiled coil. Residues 168–169 (IL) are important for autoinhibitory function. The tract at residues 196–220 (AMAASDEEEEEDLEAMQSRLAALRS) is disordered. A coiled-coil region spans residues 197 to 220 (MAASDEEEEEDLEAMQSRLAALRS). Positions 200-209 (SDEEEEEDLE) are enriched in acidic residues. The short motif at 201–209 (DEEEEEDLE) is the MIT-interacting motif element. Interaction with STAMBP regions lie at residues 203-207 (EEEED) and 219-220 (RS).

Belongs to the SNF7 family. In terms of assembly, probable core component of the endosomal sorting required for transport complex III (ESCRT-III). ESCRT-III components are thought to multimerize to form a flat lattice on the perimeter membrane of the endosome. Several assembly forms of ESCRT-III may exist that interact and act sequentially.

The protein resides in the cytoplasm. It is found in the cytosol. Its subcellular location is the membrane. The protein localises to the endosome. It localises to the late endosome membrane. In terms of biological role, probable core component of the endosomal sorting required for transport complex III (ESCRT-III) which is involved in multivesicular bodies (MVBs) formation and sorting of endosomal cargo proteins into MVBs. MVBs contain intraluminal vesicles (ILVs) that are generated by invagination and scission from the limiting membrane of the endosome and mostly are delivered to lysosomes enabling degradation of membrane proteins, such as stimulated growth factor receptors, lysosomal enzymes and lipids. Involved in late stages of cytokinesis. Plays a role in endosomal sorting/trafficking of EGF receptor. The chain is Charged multivesicular body protein 3 (chmp3) from Xenopus tropicalis (Western clawed frog).